Consider the following 221-residue polypeptide: MKDYQREFIEFAIEKQVLRFGEFTLKSGRVSPYFFNAGMFKTGGDLARLGRFYAATLMDAKIDFDLVFGPAYKGIPIATTTTVALYDHHNVDVPYCFNRKEAKTHGEGGSLVGAELEGKIMLVDDVITAGTAIRESMEIIKAHGAQLSGVLIALDRQEKGQGQLSAIQEVERDFGTQVAAIVTLGDVVTYLEEKLEGKVANQPELAENLASIKKYRLNYGI.

K26 is a binding site for 5-phospho-alpha-D-ribose 1-diphosphate. 34-35 provides a ligand contact to orotate; that stretch reads FF. 5-phospho-alpha-D-ribose 1-diphosphate-binding positions include 72–73, R99, K100, K103, H105, and 124–132; these read YK and DDVITAGTA. The orotate site is built by T128 and R156.

The protein belongs to the purine/pyrimidine phosphoribosyltransferase family. PyrE subfamily. Homodimer. Mg(2+) serves as cofactor.

The catalysed reaction is orotidine 5'-phosphate + diphosphate = orotate + 5-phospho-alpha-D-ribose 1-diphosphate. Its pathway is pyrimidine metabolism; UMP biosynthesis via de novo pathway; UMP from orotate: step 1/2. Catalyzes the transfer of a ribosyl phosphate group from 5-phosphoribose 1-diphosphate to orotate, leading to the formation of orotidine monophosphate (OMP). The polypeptide is Orotate phosphoribosyltransferase (Colwellia psychrerythraea (strain 34H / ATCC BAA-681) (Vibrio psychroerythus)).